The sequence spans 797 residues: Glycoprotein gp2 (797 aa).

A signal peptide spans 1–25; the sequence is MGFIYARKLLLCMAVSIYAIGSTTT. 2 disordered regions span residues 24–188 and 212–549; these read TTTE…TTAA and AATT…EIVP. Positions 212–373 are enriched in low complexity; it reads AATTTAATTT…PDSSTGSTST (162 aa). The segment covering 374 to 394 has biased composition (polar residues); it reads AEPSSTFTLTPSTATPSTDQF. Composition is skewed to low complexity over residues 395 to 430 and 445 to 457; these read TGSSASTESDSTDSSTVPTTGTESITESSSTTEAST and TPDGNTTSGNTTP. Polar residues predominate over residues 466-492; sequence FADTQQTPDNGVSTQHTTINDHTTANA. The segment covering 495-505 has biased composition (basic residues); that stretch reads HAGHHRGRAGG. The N-linked (GlcNAc...) asparagine; by host glycan is linked to Asn590. The helical transmembrane segment at 766 to 790 threads the bilayer; it reads FALVAATTLTVTILCLLCCLYCMLT.

The protein localises to the virion membrane. Virulence factor. The protein is Glycoprotein gp2 (EUs4) of Equine herpesvirus 1 (strain Ab4p) (EHV-1).